The sequence spans 1379 residues: DNA-directed RNA polymerase subunit beta'' (1379 aa).

Zn(2+) is bound by residues C220, C293, C300, and C303.

Belongs to the RNA polymerase beta' chain family. RpoC2 subfamily. In terms of assembly, in plastids the minimal PEP RNA polymerase catalytic core is composed of four subunits: alpha, beta, beta', and beta''. When a (nuclear-encoded) sigma factor is associated with the core the holoenzyme is formed, which can initiate transcription. It depends on Zn(2+) as a cofactor.

It localises to the plastid. It is found in the chloroplast. The enzyme catalyses RNA(n) + a ribonucleoside 5'-triphosphate = RNA(n+1) + diphosphate. Functionally, DNA-dependent RNA polymerase catalyzes the transcription of DNA into RNA using the four ribonucleoside triphosphates as substrates. The protein is DNA-directed RNA polymerase subunit beta'' of Barbarea verna (Land cress).